We begin with the raw amino-acid sequence, 232 residues long: Large ribosomal subunit protein uL1 (232 aa).

Belongs to the universal ribosomal protein uL1 family. Part of the 50S ribosomal subunit.

In terms of biological role, binds directly to 23S rRNA. The L1 stalk is quite mobile in the ribosome, and is involved in E site tRNA release. Protein L1 is also a translational repressor protein, it controls the translation of the L11 operon by binding to its mRNA. This is Large ribosomal subunit protein uL1 from Xanthomonas campestris pv. campestris (strain B100).